The sequence spans 249 residues: Coproheme decarboxylase (249 aa).

Residues R131, 145 to 149 (YPMDK), H172, and Q185 each bind Fe-coproporphyrin III. The active site involves Y145.

The protein belongs to the ChdC family. Type 1 subfamily. Fe-coproporphyrin III is required as a cofactor.

It carries out the reaction Fe-coproporphyrin III + 2 H2O2 + 2 H(+) = heme b + 2 CO2 + 4 H2O. The enzyme catalyses Fe-coproporphyrin III + H2O2 + H(+) = harderoheme III + CO2 + 2 H2O. It catalyses the reaction harderoheme III + H2O2 + H(+) = heme b + CO2 + 2 H2O. It participates in porphyrin-containing compound metabolism; protoheme biosynthesis. Functionally, involved in coproporphyrin-dependent heme b biosynthesis. Catalyzes the decarboxylation of Fe-coproporphyrin III (coproheme) to heme b (protoheme IX), the last step of the pathway. The reaction occurs in a stepwise manner with a three-propionate intermediate. The chain is Coproheme decarboxylase from Staphylococcus epidermidis (strain ATCC 35984 / DSM 28319 / BCRC 17069 / CCUG 31568 / BM 3577 / RP62A).